Consider the following 318-residue polypeptide: Potassium channel subfamily K member 15 (318 aa).

Over 1-8 (MRKQSART) the chain is Cytoplasmic. Residues 9-29 (AALILCILSYLLVGAAVFDAL) traverse the membrane as a helical segment. The segment at residues 80 to 101 (FAGSFYFAITVITTIGYGHAAP) is an intramembrane region (pore-forming). Residues 108–128 (VFCMFYALLGIPLTLVTFQSL) traverse the membrane as a helical segment. Residues 129–158 (GERLNALVRCLLLAAKRCLGLRRPHVSAEN) lie on the Cytoplasmic side of the membrane. Residues 159-179 (MVVAGLLLCAATLALGAAAFA) form a helical membrane-spanning segment. An intramembrane region (pore-forming) is located at residues 189-209 (AYYYCFITLTTIGFGDFVALQ). A helical membrane pass occupies residues 223–243 (FSFLYILLGLTVIGAFLNLVV). The Cytoplasmic segment spans residues 244 to 318 (LRFLASAEAP…DRLRARRKSI (75 aa)). The disordered stretch occupies residues 296–318 (LSPEAVHDCHSSPDRLRARRKSI). The segment covering 300-311 (AVHDCHSSPDRL) has biased composition (basic and acidic residues).

The protein belongs to the two pore domain potassium channel (TC 1.A.1.8) family. As to quaternary structure, heterodimer. In terms of processing, phosphorylated. In terms of tissue distribution, brain-specific. Highly expressed in auditory nuclei, in Purkinje cells and in olfactory bulb mitral cells.

The protein localises to the membrane. In terms of biological role, probable potassium channel subunit. No channel activity observed in heterologous systems. May need to associate with another protein to form a functional channel. This is Potassium channel subfamily K member 15 (Kcnk15) from Rattus norvegicus (Rat).